A 388-amino-acid polypeptide reads, in one-letter code: Putative N(4)-(beta-N-acetylglucosaminyl)-L-asparaginase GL17147 (388 aa).

A signal peptide spans 1 to 20 (MYKAQYLWLFGLVLISRSAT). Cystine bridges form between Cys-94-Cys-99 and Cys-193-Cys-209. The active-site Nucleophile is the Thr-240. Substrate-binding positions include 268 to 271 (RVGD) and 291 to 294 (TGDG). A disulfide bridge connects residues Cys-351 and Cys-378.

This sequence belongs to the Ntn-hydrolase family. In terms of assembly, heterotetramer of two alpha and two beta chains arranged as a dimer of alpha/beta heterodimers. Post-translationally, cleaved into an alpha and beta chain by autocatalysis; this activates the enzyme. The N-terminal residue of the beta subunit is responsible for the nucleophile hydrolase activity.

The enzyme catalyses N(4)-(beta-N-acetyl-D-glucosaminyl)-L-asparagine + H2O = N-acetyl-beta-D-glucosaminylamine + L-aspartate + H(+). Cleaves the GlcNAc-Asn bond which joins oligosaccharides to the peptide of asparagine-linked glycoproteins. In Drosophila persimilis (Fruit fly), this protein is Putative N(4)-(beta-N-acetylglucosaminyl)-L-asparaginase GL17147.